The sequence spans 204 residues: uncharacterized protein (204 aa).

An N-terminal signal peptide occupies residues M1–A17. A disordered region spans residues A17–S102. C18 carries the N-palmitoyl cysteine lipid modification. The S-diacylglycerol cysteine moiety is linked to residue C18. The segment covering D23 to S70 has biased composition (basic and acidic residues). Residues A71–S102 are compositionally biased toward low complexity.

Its subcellular location is the cell membrane. This is an uncharacterized protein from Staphylococcus aureus (strain Mu50 / ATCC 700699).